Reading from the N-terminus, the 38-residue chain is MTQSNPNEQNVELNRTSLYWGLLLIXVLAVLFSNYFFN.

A helical membrane pass occupies residues 17-37 (SLYWGLLLIXVLAVLFSNYFF).

This sequence belongs to the PsbL family. In terms of assembly, PSII is composed of 1 copy each of membrane proteins PsbA, PsbB, PsbC, PsbD, PsbE, PsbF, PsbH, PsbI, PsbJ, PsbK, PsbL, PsbM, PsbT, PsbX, PsbY, PsbZ, Psb30/Ycf12, at least 3 peripheral proteins of the oxygen-evolving complex and a large number of cofactors. It forms dimeric complexes.

It is found in the plastid. The protein resides in the chloroplast thylakoid membrane. Functionally, one of the components of the core complex of photosystem II (PSII). PSII is a light-driven water:plastoquinone oxidoreductase that uses light energy to abstract electrons from H(2)O, generating O(2) and a proton gradient subsequently used for ATP formation. It consists of a core antenna complex that captures photons, and an electron transfer chain that converts photonic excitation into a charge separation. This subunit is found at the monomer-monomer interface and is required for correct PSII assembly and/or dimerization. The chain is Photosystem II reaction center protein L from Allium textile (Textile onion).